The chain runs to 501 residues: Glycerol kinase (501 aa).

T16 contributes to the ADP binding site. Residues T16, T17, and S18 each coordinate ATP. T16 contributes to the sn-glycerol 3-phosphate binding site. R20 is a binding site for ADP. Residues R84, E85, Y135, and D242 each coordinate sn-glycerol 3-phosphate. Glycerol is bound by residues R84, E85, Y135, D242, and Q243. T264 and G307 together coordinate ADP. ATP is bound by residues T264, G307, Q311, and G408. G408 is an ADP binding site.

The protein belongs to the FGGY kinase family.

It carries out the reaction glycerol + ATP = sn-glycerol 3-phosphate + ADP + H(+). Its pathway is polyol metabolism; glycerol degradation via glycerol kinase pathway; sn-glycerol 3-phosphate from glycerol: step 1/1. Functionally, key enzyme in the regulation of glycerol uptake and metabolism. Catalyzes the phosphorylation of glycerol to yield sn-glycerol 3-phosphate. The sequence is that of Glycerol kinase from Saccharolobus islandicus (strain M.16.27) (Sulfolobus islandicus).